Consider the following 365-residue polypeptide: Putative tRNA 2'-phosphotransferase (365 aa).

Disordered stretches follow at residues 1–35 (MYKN…IRPR) and 231–254 (LLDA…PESI). The segment covering 17–27 (SGTPATKSSSK) has biased composition (low complexity).

This sequence belongs to the KptA/TPT1 family.

It carries out the reaction 2'-phospho-[ligated tRNA] + NAD(+) = mature tRNA + ADP-alpha-D-ribose 1'',2''-cyclic phosphate + nicotinamide. In terms of biological role, catalyzes the last step of tRNA splicing, the transfer of the splice junction 2'-phosphate from ligated tRNA to NAD to produce ADP-ribose 1''-2'' cyclic phosphate. This chain is Putative tRNA 2'-phosphotransferase, found in Schizosaccharomyces pombe (strain 972 / ATCC 24843) (Fission yeast).